The chain runs to 123 residues: uncharacterized protein (123 aa).

Thr56 is subject to Phosphothreonine. A phosphoserine mark is found at Ser73, Ser87, Ser97, Ser113, and Ser119.

Highly expressed in the kidney (at protein level).

The protein localises to the cytoplasm. This is an uncharacterized protein from Felis catus (Cat).